The chain runs to 116 residues: Large ribosomal subunit protein bL20 (116 aa).

Belongs to the bacterial ribosomal protein bL20 family.

Binds directly to 23S ribosomal RNA and is necessary for the in vitro assembly process of the 50S ribosomal subunit. It is not involved in the protein synthesizing functions of that subunit. This is Large ribosomal subunit protein bL20 from Nautilia profundicola (strain ATCC BAA-1463 / DSM 18972 / AmH).